The chain runs to 173 residues: Crossover junction endodeoxyribonuclease RuvC (173 aa).

Catalysis depends on residues aspartate 8, glutamate 67, and aspartate 139. 3 residues coordinate Mg(2+): aspartate 8, glutamate 67, and aspartate 139.

Belongs to the RuvC family. In terms of assembly, homodimer which binds Holliday junction (HJ) DNA. The HJ becomes 2-fold symmetrical on binding to RuvC with unstacked arms; it has a different conformation from HJ DNA in complex with RuvA. In the full resolvosome a probable DNA-RuvA(4)-RuvB(12)-RuvC(2) complex forms which resolves the HJ. Mg(2+) is required as a cofactor.

The protein localises to the cytoplasm. The enzyme catalyses Endonucleolytic cleavage at a junction such as a reciprocal single-stranded crossover between two homologous DNA duplexes (Holliday junction).. Functionally, the RuvA-RuvB-RuvC complex processes Holliday junction (HJ) DNA during genetic recombination and DNA repair. Endonuclease that resolves HJ intermediates. Cleaves cruciform DNA by making single-stranded nicks across the HJ at symmetrical positions within the homologous arms, yielding a 5'-phosphate and a 3'-hydroxyl group; requires a central core of homology in the junction. The consensus cleavage sequence is 5'-(A/T)TT(C/G)-3'. Cleavage occurs on the 3'-side of the TT dinucleotide at the point of strand exchange. HJ branch migration catalyzed by RuvA-RuvB allows RuvC to scan DNA until it finds its consensus sequence, where it cleaves and resolves the cruciform DNA. This chain is Crossover junction endodeoxyribonuclease RuvC, found in Aliivibrio salmonicida (strain LFI1238) (Vibrio salmonicida (strain LFI1238)).